The chain runs to 188 residues: Elongation factor P (188 aa).

Belongs to the elongation factor P family.

Its subcellular location is the cytoplasm. The protein operates within protein biosynthesis; polypeptide chain elongation. In terms of biological role, involved in peptide bond synthesis. Stimulates efficient translation and peptide-bond synthesis on native or reconstituted 70S ribosomes in vitro. Probably functions indirectly by altering the affinity of the ribosome for aminoacyl-tRNA, thus increasing their reactivity as acceptors for peptidyl transferase. The sequence is that of Elongation factor P from Leptospira borgpetersenii serovar Hardjo-bovis (strain JB197).